A 167-amino-acid polypeptide reads, in one-letter code: Transcription factor 24 (167 aa).

A compositionally biased stretch (low complexity) spans 1–23 (MDRGRPAGSPLSASAEPAPLAAA). Positions 1-60 (MDRGRPAGSPLSASAEPAPLAAAIRDSRPGRTGPGPAGPGGGSRSGSGRPAAANAARERS) are disordered. The span at 32 to 45 (TGPGPAGPGGGSRS) shows a compositional bias: gly residues. Over residues 46–55 (GSGRPAAANA) the composition is skewed to low complexity. Residues 49–101 (RPAAANAARERSRVQTLRHAFLELQRTLPSVPPDTKLSKLDVLLLATTYIAHL) form the bHLH domain.

As to quaternary structure, efficient DNA binding requires dimerization with another bHLH protein.

The protein localises to the nucleus. Putative transcription factor. The polypeptide is Transcription factor 24 (TCF24) (Homo sapiens (Human)).